Reading from the N-terminus, the 354-residue chain is Maleylacetate reductase 1 (354 aa).

The protein belongs to the iron-containing alcohol dehydrogenase family. As to quaternary structure, homodimer.

The enzyme catalyses 3-oxoadipate + NAD(+) = maleylacetate + NADH + H(+). It catalyses the reaction 3-oxoadipate + NADP(+) = maleylacetate + NADPH + H(+). It participates in aromatic compound metabolism; 3-chlorocatechol degradation. This is Maleylacetate reductase 1 (tfdFI) from Cupriavidus pinatubonensis (strain JMP 134 / LMG 1197) (Cupriavidus necator (strain JMP 134)).